Consider the following 610-residue polypeptide: MNSQDLKKRQEKIRNFSIIAHIDHGKSTLADRILEKTETVSSREMQAQLLDSMDLERERGITIKLNAIELNYTAKDGETYIFHLIDTPGHVDFTYEVSRSLAACEGAILVVDAAQGIEAQTLANVYLALDNDLEILPVINKIDLPAADPERVRHEVEDVIGLDASEAVLASAKAGIGIEEILEQIVEKVPAPTGDVDAPLQALIFDSVYDAYRGVILQVRIVNGIVKPGDKIQMMSNGKTFDVTEVGIFTPKAVGRDFLATGDVGYVAASIKTVADTRVGDTVTLANNPAKEALHGYKQMNPMVFAGIYPIESNKYNDLREALEKLQLNDASLQFEPETSQALGFGFRCGFLGLLHMDVIQERLEREFNIDLIMTAPSVVYHVHTTDEDMIEVSNPSEFPDPTRVAFIEEPYVKAQIMVPQEFVGAVMELSQRKRGDFVTMDYIDDNRVNVIYQIPLAEIVFDFFDKLKSSTRGYASFDYDMSEYRRSQLVKMDILLNGDKVDALSFIVHKEFAYERGKIIVEKLKKIIPRQQFEVPIQAAIGQKIVARSDIKALRKNVLAKCYGGDVSRKRKLLEKQKAGKKRMKAIGSVEVPQEAFLSVLSMDDDAKK.

A tr-type G domain is found at glutamate 11–threonine 193. GTP-binding positions include aspartate 23–threonine 28 and asparagine 140–aspartate 143.

It belongs to the TRAFAC class translation factor GTPase superfamily. Classic translation factor GTPase family. LepA subfamily.

The protein localises to the cell membrane. The enzyme catalyses GTP + H2O = GDP + phosphate + H(+). In terms of biological role, required for accurate and efficient protein synthesis under certain stress conditions. May act as a fidelity factor of the translation reaction, by catalyzing a one-codon backward translocation of tRNAs on improperly translocated ribosomes. Back-translocation proceeds from a post-translocation (POST) complex to a pre-translocation (PRE) complex, thus giving elongation factor G a second chance to translocate the tRNAs correctly. Binds to ribosomes in a GTP-dependent manner. The protein is Elongation factor 4 of Streptococcus pyogenes serotype M12 (strain MGAS9429).